We begin with the raw amino-acid sequence, 463 residues long: MTTETRSLFSQLPAIDRLLRDSAFLTLRETYGHTRVVDLLRQMVDEAREMIRATQALPAWCDNWACEADARLQKEAQSALRPVINLTGTVLHTNLGRALQAEEAVAAVSQAMRSPVTLEYDLDGAGRGHRDRALAELLCRITGAEDACIVNNNAAAVLLMLAATASGKEVVVSRGELVEIGGAFRIPDVMRQAGCALHEVGTTNRTHAKDYRQAVNENTALLMKVHTSNYSIEGFTKAVDEAELVSIGKELDIPVVTDLGSGSLVDLSQYGLPKEPMPQELIAAGVSLVSFSGDKLLGGPQAGIIVGKKEMIARLQSHPLKRALRADKMTLAALEATLRLYLHPEALSEKLPTLRLLTRQQEKIQVQGQRLLAPLLAHYGEEFAVAVMPCQSQIGSGSLPVDRLPSAALTFTPHDGRGSRLETLAARWRELPVPVIGRIYDGRLWLDLRCLEDETRFLEMLLK.

The residue at position 295 (K295) is an N6-(pyridoxal phosphate)lysine.

Belongs to the SelA family. In terms of assembly, homodecamer; pentamer of dimers. Binds only one seryl-tRNA(Sec) per dimer. It depends on pyridoxal 5'-phosphate as a cofactor.

Its subcellular location is the cytoplasm. The catalysed reaction is L-seryl-tRNA(Sec) + selenophosphate + H(+) = L-selenocysteinyl-tRNA(Sec) + phosphate. The protein operates within aminoacyl-tRNA biosynthesis; selenocysteinyl-tRNA(Sec) biosynthesis; selenocysteinyl-tRNA(Sec) from L-seryl-tRNA(Sec) (bacterial route): step 1/1. Converts seryl-tRNA(Sec) to selenocysteinyl-tRNA(Sec) required for selenoprotein biosynthesis. The chain is L-seryl-tRNA(Sec) selenium transferase from Escherichia fergusonii (strain ATCC 35469 / DSM 13698 / CCUG 18766 / IAM 14443 / JCM 21226 / LMG 7866 / NBRC 102419 / NCTC 12128 / CDC 0568-73).